The sequence spans 128 residues: MDTYNIISLLLVGFIWGGTNPLIKRGSEGVSKVKKDNFLSQIIYEFVYLWTRPSYTIPMLINLSGSVVFFYTLSKVDISLVVPISNSLTFLFTSLMGMLLGEKVLHFKSYLGMIFVLAGVTICVSSKF.

4 consecutive transmembrane segments (helical) span residues 3 to 23 (TYNI…NPLI), 53 to 73 (PSYT…FYTL), 80 to 100 (LVVP…GMLL), and 104 to 124 (VLHF…TICV).

This sequence belongs to the TMEM234 family.

The protein resides in the membrane. This chain is Transmembrane protein 234 homolog, found in Dictyostelium discoideum (Social amoeba).